The following is a 143-amino-acid chain: Class II hydrophobin qid3 (143 aa).

Residues M1–A17 form the signal peptide. Residues N20–T37 show a composition bias toward pro residues. The segment at N20–N67 is disordered. 10 tandem repeats follow at residues N41 to G42, N43 to G44, N47 to G48, N49 to G50, N51 to G52, N53 to G54, N55 to G56, N59 to G60, N61 to G62, and N63 to G64. The 10 X 2 AA repeats of N-G stretch occupies residues N41 to G64. Gly residues predominate over residues G42–N63. 3 cysteine pairs are disulfide-bonded: C74-C124, C85-C97, and C125-C136.

This sequence belongs to the cerato-ulmin hydrophobin family. Homotetramer. Further self-assembles to form highly ordered films at water-air interfaces through intermolecular interactions.

It is found in the secreted. The protein localises to the cell wall. Its function is as follows. Aerial growth, conidiation, and dispersal of filamentous fungi in the environment rely upon a capability of their secreting small amphipathic proteins called hydrophobins (HPBs) with low sequence identity. Class I can self-assemble into an outermost layer of rodlet bundles on aerial cell surfaces, conferring cellular hydrophobicity that supports fungal growth, development and dispersal; whereas Class II form highly ordered films at water-air interfaces through intermolecular interactions but contribute nothing to the rodlet structure. Qid3 is a class II hydrophobin that might acts as a chitinase inhibitor at the cell surface that blocks the degradation of the chitin rings localized in the budding region of dividing cells. The chain is Class II hydrophobin qid3 from Trichoderma harzianum (Hypocrea lixii).